Consider the following 237-residue polypeptide: UDP-2,3-diacylglucosamine hydrolase (237 aa).

Positions 9, 11, 42, 80, and 115 each coordinate Mn(2+). Asn80 to Arg81 contributes to the substrate binding site. Positions 123, 161, 165, 168, and 196 each coordinate substrate. Residues His196 and His198 each coordinate Mn(2+).

It belongs to the LpxH family. Requires Mn(2+) as cofactor.

The protein localises to the cell inner membrane. It is found in the cytoplasm. It catalyses the reaction UDP-2-N,3-O-bis[(3R)-3-hydroxytetradecanoyl]-alpha-D-glucosamine + H2O = 2-N,3-O-bis[(3R)-3-hydroxytetradecanoyl]-alpha-D-glucosaminyl 1-phosphate + UMP + 2 H(+). It functions in the pathway glycolipid biosynthesis; lipid IV(A) biosynthesis; lipid IV(A) from (3R)-3-hydroxytetradecanoyl-[acyl-carrier-protein] and UDP-N-acetyl-alpha-D-glucosamine: step 4/6. Its function is as follows. Hydrolyzes the pyrophosphate bond of UDP-2,3-diacylglucosamine to yield 2,3-diacylglucosamine 1-phosphate (lipid X) and UMP by catalyzing the attack of water at the alpha-P atom. Involved in the biosynthesis of lipid A, a phosphorylated glycolipid that anchors the lipopolysaccharide to the outer membrane of the cell. The protein is UDP-2,3-diacylglucosamine hydrolase of Haemophilus influenzae (strain ATCC 51907 / DSM 11121 / KW20 / Rd).